Here is a 104-residue protein sequence, read N- to C-terminus: Fusaric acid biosynthesis protein 2 (104 aa).

The protein belongs to the YciI family.

It participates in mycotoxin biosynthesis. Its function is as follows. Part of the gene cluster that mediates the biosynthesis of fusaric acid, a mycotoxin with low to moderate toxicity to animals and humans, but with high phytotoxic properties. L-aspartate is suggested as fusaric acid amino acid precursor that is activated and further processed to O-acetyl-L-homoserine by cluster enzymes aspartate kinase FUB3 and homoserine O-acetyltransferase FUB5, as well as enzymes of the primary metabolism. The polyketide synthase (PKS) FUB1 generates the triketide trans-2-hexenal which is presumptively released by the hydrolase FUB4 and linked to the NRPS-bound amino acid precursor by NAD(P)-dependent dehydrogenase FUB6. FUB1, FUB4, and the non-canonical NRPS Fub8 may form an enzyme complex. Further processing of the NRPS-bound intermediate might be carried out by FUB6 and the sulfhydrylase FUB7, enabling a spontaneous electrocyclization to close the carbon backbone of fusaric acid. Dihydrofusaric acid is likely to be released via reduction by the thioester reductase (TR) domain of FUB8 whereupon the final oxidation to fusaric acid may (also) be performed by the FMN-dependent dehydrogenase FUB9. In Gibberella fujikuroi (strain CBS 195.34 / IMI 58289 / NRRL A-6831) (Bakanae and foot rot disease fungus), this protein is Fusaric acid biosynthesis protein 2.